Here is a 521-residue protein sequence, read N- to C-terminus: Probable glycine dehydrogenase (decarboxylating) subunit 2 (521 aa).

Residue Lys-279 is modified to N6-(pyridoxal phosphate)lysine.

Belongs to the GcvP family. C-terminal subunit subfamily. In terms of assembly, the glycine cleavage system is composed of four proteins: P, T, L and H. In this organism, the P 'protein' is a heterodimer of two subunits. Pyridoxal 5'-phosphate serves as cofactor.

The catalysed reaction is N(6)-[(R)-lipoyl]-L-lysyl-[glycine-cleavage complex H protein] + glycine + H(+) = N(6)-[(R)-S(8)-aminomethyldihydrolipoyl]-L-lysyl-[glycine-cleavage complex H protein] + CO2. Functionally, the glycine cleavage system catalyzes the degradation of glycine. The P protein binds the alpha-amino group of glycine through its pyridoxal phosphate cofactor; CO(2) is released and the remaining methylamine moiety is then transferred to the lipoamide cofactor of the H protein. The chain is Probable glycine dehydrogenase (decarboxylating) subunit 2 from Staphylothermus marinus (strain ATCC 43588 / DSM 3639 / JCM 9404 / F1).